We begin with the raw amino-acid sequence, 439 residues long: Probable non-inhibitory serpin-Z9 (439 aa).

The interval 12–44 (RRPPFPAGDANHRRLSSAPAPKPEAPAEAMPPP) is disordered. A compositionally biased stretch (pro residues) spans 31-44 (APKPEAPAEAMPPP). Residues 389–413 (GIEETSVSMGLGKPLPAQHFKADHP) form an RCL region.

This sequence belongs to the serpin family.

The protein is Probable non-inhibitory serpin-Z9 of Oryza sativa subsp. japonica (Rice).